The primary structure comprises 380 residues: Cytochrome b (380 aa).

Helical transmembrane passes span 34-54 (FGSLLGICLLTQILTGLLLAM), 78-99 (WLIRNLHANGASFFFICIYLHI), 114-134 (WNTGVILLLTLMATAFVGYVL), and 179-199 (FFALHFLLPFMIAGLTLIHLT). Heme b is bound by residues histidine 84 and histidine 98. Positions 183 and 197 each coordinate heme b. Histidine 202 is an a ubiquinone binding site. Helical transmembrane passes span 227–247 (LKDILGFMLLLLPLTTLALFS), 289–309 (LGGVLALAASVLVLFLAPFLH), 321–341 (ISQLLFWILVANLFILTWVGS), and 348–368 (FIIIGQLASLTYFTILLILFP).

This sequence belongs to the cytochrome b family. As to quaternary structure, the cytochrome bc1 complex contains 11 subunits: 3 respiratory subunits (MT-CYB, CYC1 and UQCRFS1), 2 core proteins (UQCRC1 and UQCRC2) and 6 low-molecular weight proteins (UQCRH/QCR6, UQCRB/QCR7, UQCRQ/QCR8, UQCR10/QCR9, UQCR11/QCR10 and a cleavage product of UQCRFS1). This cytochrome bc1 complex then forms a dimer. Requires heme b as cofactor.

It is found in the mitochondrion inner membrane. In terms of biological role, component of the ubiquinol-cytochrome c reductase complex (complex III or cytochrome b-c1 complex) that is part of the mitochondrial respiratory chain. The b-c1 complex mediates electron transfer from ubiquinol to cytochrome c. Contributes to the generation of a proton gradient across the mitochondrial membrane that is then used for ATP synthesis. This is Cytochrome b (MT-CYB) from Puffinus opisthomelas (Black-vented shearwater).